The following is a 1480-amino-acid chain: MSNTPYNSSVPSIASMTQSSVSRSPNMHTATTPGANTSSNSPPLHMSSDSSKIKRKRNRIPLSCTICRKRKVKCDKLRPHCQQCTKTGVAHLCHYMEQTWAEEAEKELLKDNELKKLRERVKSLEKTLSKVHSSPSSNSLKSYNTPESSNLFMGNDEHTTLVNANTGSASSASHMHQQQQQQQQQEQQQDFSRSANANANSSSLSISNKYDNDELDLTKDFDLLHIKSNGTIHLGATHWLSIMKGDPYLKLLWGHIFAMREKLNEWYYQKNSYSKLKSSKCPINHAQAPPSAATRKCPVDHSAFSSGMVAPKEETPLPRKCPVDHTMFSSGMIPPREDTSSQKRCPVDHTMYSAGMMPPKDETPSPFSTKAMIDHNKHTMNPPQSKCPVDHRNYMKEYPSDMANSSSNPASRCPIDHSSMKNTAALPASTHNTIPHHQPQSGSHARSHPAQSRKHDSYMTESEVLATLCEMLPPKRVIALFIEKFFKHLYPAIPILDEQNFKNHMNQMLSLSSMNPTVNNFGMSMPSSSTLENQPITQINLPKLSDSCNLGILIIILRLTWLSIPSNSCEVDLGEESGSFLVPNESSNMSASALTSMAKEESLLLKHETPVEALELCQKYLIKFDELSNISNNNVNLTTVQFAIFYNFYMKSASNDLTTLTNTNNTGMANPGHDSESHQILLSNITQMAFSCGLHRDPDNFPQLNATIPATSQDVSNNGSKKANPSTNPTLNNNMSAATTNSSSRSGSADSRSGSNPVNKKENQVSIERFKHTWRKIWYYIVSMDVNQSLSLGSPRLLRNLRDFSDTKLPSASRIDYVRDIKELIIVKNFTLFFQIDLCIIAVLNHILNVSLARSVRKFELDSLINLLKNLTYGTENVNDVVGSLINKGLLPTSEGGSVDSNNDEIYGLPKLPDILNHGQHNQNLYADGRNTSSSDIDKKLDLPHESTTRALFFSKHMTIRMLLYLLNYILFTHYEPMGSEDPGTNILAKEYAQEALNFAMDGYRNCMIFFNNIRNTNSLFDYMNVILSYPCLDIGHRSLQFIVCLILRAKCGPLTGMRESSIITNGTSSGFNSSVEDEDVKVKQESSDELKKDDFMKDVNLDSGDSLAEILMSRMLLFQKLTKQLSKKYNYAIRMNKSTGFFVSLLDTPSKKSDSKSGGSSFMLGNWKHPKVSNMSGFLAGDKDQLQKCPVYQDALGFVSPTGANEGSAPMQGMSLQGSTARMGGTQLPPIRSYKPITYTSSNLRRMNETGEAEAKRRRFNDGYIDNNSNNDIPRGISPKPSNGLSSVQPLLSSFSMNQLNGGTIPTVPSLTNITSQMGALPSLDRITTNQINLPDPSRDEAFDNSIKQMTPMTSAFMNANTTIPSSTLNGNMNMNGAGTANTDTSANGSALSTLTSPQGSDLASNSATQYKPDLEDFLMQNSNFNGLMINPSSLVEVVGGYNDPNNLGRNDAVDFLPVDNVEIDGLVDFYRADFPIWE.

Residues 1-50 (MSNTPYNSSVPSIASMTQSSVSRSPNMHTATTPGANTSSNSPPLHMSSDS) show a composition bias toward polar residues. The disordered stretch occupies residues 1 to 56 (MSNTPYNSSVPSIASMTQSSVSRSPNMHTATTPGANTSSNSPPLHMSSDSSKIKRK). Positions 64, 67, 74, 81, 84, and 93 each coordinate Zn(2+). Residues 64-93 (CTICRKRKVKCDKLRPHCQQCTKTGVAHLC) constitute a DNA-binding region (zn(2)-C6 fungal-type). Residues 105 to 134 (EKELLKDNELKKLRERVKSLEKTLSKVHSS) adopt a coiled-coil conformation. A disordered region spans residues 126 to 208 (KTLSKVHSSP…ANSSSLSISN (83 aa)). Over residues 130 to 142 (KVHSSPSSNSLKS) the composition is skewed to low complexity. 2 stretches are compositionally biased toward polar residues: residues 143 to 152 (YNTPESSNLF) and 160 to 176 (TLVN…SHMH). The segment covering 177-208 (QQQQQQQQQEQQQDFSRSANANANSSSLSISN) has biased composition (low complexity). A heme-responsive; required for HMC formation region spans residues 244–441 (KGDPYLKLLW…NTIPHHQPQS (198 aa)). 6 HRM repeats span residues 280–285 (KCPINH), 296–301 (KCPVDH), 320–325 (KCPVDH), 344–349 (RCPVDH), 386–391 (KCPVDH), and 412–417 (RCPIDH). 2 stretches are compositionally biased toward polar residues: residues 429-444 (STHN…SGSH) and 703-731 (QLNA…NPTL). 2 disordered regions span residues 429–456 (STHN…RKHD) and 703–764 (QLNA…KENQ). Low complexity predominate over residues 732–756 (NNNMSAATTNSSSRSGSADSRSGSN). The stretch at 1189-1194 (KCPVYQ) is one HRM 7 repeat. A disordered region spans residues 1381 to 1408 (TANTDTSANGSALSTLTSPQGSDLASNS). Residues 1385 to 1408 (DTSANGSALSTLTSPQGSDLASNS) are compositionally biased toward polar residues.

Binds DNA as a homodimer. Interacts with SRO9 and YDJ1. In the absence of heme, binds to at least four cellular proteins, including YDJ1 and SRO9, forming a high-molecular-weight complex (HMC) which results in repression of its activity and dictates its DNA-binding specificity.

It is found in the nucleus. Functionally, regulation of oxygen dependent gene expression. It modulates the expression of Iso-1 (CYP1) and Iso-2 (CYP3) cytochrome c. In response to heme, promotes transcription of genes encoding functions required for respiration, controlling oxidative damage and repression of anaerobic genes. Binds to the sequence 5'-CGGNNNTNNCGG-3'. Is non-functional in terms of iso-1 cytochrome c expression in strain S288c and its derivatives. The polypeptide is Heme-responsive zinc finger transcription factor HAP1 (HAP1) (Saccharomyces cerevisiae (strain Kyokai no. 7 / NBRC 101557) (Baker's yeast)).